We begin with the raw amino-acid sequence, 770 residues long: ATP-dependent RNA helicase HCA4 (770 aa).

Positions Lys41–Ala69 match the Q motif motif. Residues Ile72–Val246 form the Helicase ATP-binding domain. An ATP-binding site is contributed by Ala85–Thr92. A DEAD box motif is present at residues Asp194–Asp197. The region spanning Lys278–Leu437 is the Helicase C-terminal domain. 4 positions are modified to phosphoserine: Ser692, Ser710, Ser714, and Ser743. The interval Gly705–His724 is disordered.

The protein belongs to the DEAD box helicase family. DDX10/DBP4 subfamily. In terms of assembly, interacts with the U3 and U14 snoRNAs. Associates with pre-ribosomal complexes.

It localises to the nucleus. Its subcellular location is the nucleolus. It catalyses the reaction ATP + H2O = ADP + phosphate + H(+). Functionally, ATP-dependent RNA helicase required for ribosome biogenesis. Involved in the release of U14 snoRNA in pre-ribosomal complexes. Required for pre-rRNA cleavage at site A2. This Saccharomyces cerevisiae (strain ATCC 204508 / S288c) (Baker's yeast) protein is ATP-dependent RNA helicase HCA4 (HCA4).